A 122-amino-acid polypeptide reads, in one-letter code: Large ribosomal subunit protein eL34 (122 aa).

Belongs to the eukaryotic ribosomal protein eL34 family.

In Dictyostelium discoideum (Social amoeba), this protein is Large ribosomal subunit protein eL34 (rpl34).